The chain runs to 261 residues: Cytochrome c oxidase subunit 3 (261 aa).

The Mitochondrial matrix segment spans residues 1–15 (MTRQTHAYHMVNPSP). Residues 16 to 34 (WPLTGALSALLMTSGLIMW) form a helical membrane-spanning segment. Residues 35-40 (FHFNST) lie on the Mitochondrial intermembrane side of the membrane. The chain crosses the membrane as a helical span at residues 41 to 66 (ILLMLGLTTNMLTMYQWWRDVIREST). At 67–72 (FQGHHT) the chain is on the mitochondrial matrix side. The helical transmembrane segment at 73–105 (PNVQKGLRYGMILFIISEVLFFTGFFWAFYHSS) threads the bilayer. Residues 106 to 128 (LAPTPELGGCWPPTGIHPLNPLE) lie on the Mitochondrial intermembrane side of the membrane. The chain crosses the membrane as a helical span at residues 129–152 (VPLLNTSVLLASGVSITWAHHSLM). Over 153–155 (EGN) the chain is Mitochondrial matrix. The helical transmembrane segment at 156 to 183 (RNHMLQALFITIALGVYFTLLQASEYYE) threads the bilayer. Over 184 to 190 (APFTISD) the chain is Mitochondrial intermembrane. Residues 191-223 (GVYGSTFFVATGFHGLHVIIGSTFLIVCFFRQL) form a helical membrane-spanning segment. Residues 224–232 (KFHFTSNHH) lie on the Mitochondrial matrix side of the membrane. A helical membrane pass occupies residues 233-256 (FGFEAAAWYWHFVDVVWLFLYVSI). The Mitochondrial intermembrane portion of the chain corresponds to 257 to 261 (YWWGS).

It belongs to the cytochrome c oxidase subunit 3 family. As to quaternary structure, component of the cytochrome c oxidase (complex IV, CIV), a multisubunit enzyme composed of 14 subunits. The complex is composed of a catalytic core of 3 subunits MT-CO1, MT-CO2 and MT-CO3, encoded in the mitochondrial DNA, and 11 supernumerary subunits COX4I, COX5A, COX5B, COX6A, COX6B, COX6C, COX7A, COX7B, COX7C, COX8 and NDUFA4, which are encoded in the nuclear genome. The complex exists as a monomer or a dimer and forms supercomplexes (SCs) in the inner mitochondrial membrane with NADH-ubiquinone oxidoreductase (complex I, CI) and ubiquinol-cytochrome c oxidoreductase (cytochrome b-c1 complex, complex III, CIII), resulting in different assemblies (supercomplex SCI(1)III(2)IV(1) and megacomplex MCI(2)III(2)IV(2)).

The protein localises to the mitochondrion inner membrane. The enzyme catalyses 4 Fe(II)-[cytochrome c] + O2 + 8 H(+)(in) = 4 Fe(III)-[cytochrome c] + 2 H2O + 4 H(+)(out). Its function is as follows. Component of the cytochrome c oxidase, the last enzyme in the mitochondrial electron transport chain which drives oxidative phosphorylation. The respiratory chain contains 3 multisubunit complexes succinate dehydrogenase (complex II, CII), ubiquinol-cytochrome c oxidoreductase (cytochrome b-c1 complex, complex III, CIII) and cytochrome c oxidase (complex IV, CIV), that cooperate to transfer electrons derived from NADH and succinate to molecular oxygen, creating an electrochemical gradient over the inner membrane that drives transmembrane transport and the ATP synthase. Cytochrome c oxidase is the component of the respiratory chain that catalyzes the reduction of oxygen to water. Electrons originating from reduced cytochrome c in the intermembrane space (IMS) are transferred via the dinuclear copper A center (CU(A)) of subunit 2 and heme A of subunit 1 to the active site in subunit 1, a binuclear center (BNC) formed by heme A3 and copper B (CU(B)). The BNC reduces molecular oxygen to 2 water molecules using 4 electrons from cytochrome c in the IMS and 4 protons from the mitochondrial matrix. This Eudorcas rufifrons (Red-fronted gazelle) protein is Cytochrome c oxidase subunit 3 (MT-CO3).